Reading from the N-terminus, the 422-residue chain is Dihydrolipoyllysine-residue succinyltransferase component of 2-oxoglutarate dehydrogenase complex (422 aa).

In terms of domain architecture, Lipoyl-binding spans 1–76 (MPEVKVPELA…EVGQAIAVIG (76 aa)). Lysine 42 carries the N6-lipoyllysine modification. Residues 77–184 (EGSGNASKEN…APAKEEKKYN (108 aa)) form a disordered region. Composition is skewed to polar residues over residues 80–94 (GNAS…TPQQ) and 114–130 (EVNQ…NATP). In terms of domain architecture, Peripheral subunit-binding (PSBD) spans 127 to 163 (NATPSARRYARENGVNLAEVSPKTNDVVRKEDIDKKQ). Over residues 152–163 (DVVRKEDIDKKQ) the composition is skewed to basic and acidic residues. Low complexity predominate over residues 164 to 176 (QAPASTQTTQQAP). Active-site residues include histidine 393 and aspartate 397.

Belongs to the 2-oxoacid dehydrogenase family. As to quaternary structure, forms a 24-polypeptide structural core with octahedral symmetry. Part of the 2-oxoglutarate dehydrogenase (OGDH) complex composed of E1 (2-oxoglutarate dehydrogenase), E2 (dihydrolipoamide succinyltransferase) and E3 (dihydrolipoamide dehydrogenase); the complex contains multiple copies of the three enzymatic components (E1, E2 and E3). (R)-lipoate serves as cofactor.

The enzyme catalyses N(6)-[(R)-dihydrolipoyl]-L-lysyl-[protein] + succinyl-CoA = N(6)-[(R)-S(8)-succinyldihydrolipoyl]-L-lysyl-[protein] + CoA. It participates in amino-acid degradation; L-lysine degradation via saccharopine pathway; glutaryl-CoA from L-lysine: step 6/6. Its function is as follows. E2 component of the 2-oxoglutarate dehydrogenase (OGDH) complex which catalyzes the second step in the conversion of 2-oxoglutarate to succinyl-CoA and CO(2). This chain is Dihydrolipoyllysine-residue succinyltransferase component of 2-oxoglutarate dehydrogenase complex (odhB), found in Staphylococcus aureus (strain bovine RF122 / ET3-1).